The sequence spans 380 residues: 3-isopropylmalate dehydrogenase (380 aa).

NAD(+) is bound at residue 79–90 (GPEWAGVHPTPE). Substrate-binding residues include Arg-97, Arg-107, Arg-136, and Asp-229. The Mg(2+) site is built by Asp-229, Asp-254, and Asp-258. 294–306 (GSAPDISGKGLAN) contacts NAD(+).

This sequence belongs to the isocitrate and isopropylmalate dehydrogenases family. In terms of assembly, homodimer. Requires Mg(2+) as cofactor. The cofactor is Mn(2+).

It localises to the cytoplasm. The catalysed reaction is (2R,3S)-3-isopropylmalate + NAD(+) = 4-methyl-2-oxopentanoate + CO2 + NADH. It functions in the pathway amino-acid biosynthesis; L-leucine biosynthesis; L-leucine from 3-methyl-2-oxobutanoate: step 3/4. Its function is as follows. Catalyzes the oxidation of 3-carboxy-2-hydroxy-4-methylpentanoate (3-isopropylmalate) to 3-carboxy-4-methyl-2-oxopentanoate. The product decarboxylates to 4-methyl-2 oxopentanoate. The sequence is that of 3-isopropylmalate dehydrogenase (LEU2) from Hapsidospora chrysogena (Acremonium chrysogenum).